We begin with the raw amino-acid sequence, 373 residues long: GTP cyclohydrolase 1 type 2 homolog (373 aa).

Residues H67, H68, D106, H333, and E336 each contribute to the a divalent metal cation site.

Belongs to the GTP cyclohydrolase I type 2/NIF3 family. As to quaternary structure, homohexamer.

This is GTP cyclohydrolase 1 type 2 homolog from Listeria innocua serovar 6a (strain ATCC BAA-680 / CLIP 11262).